The primary structure comprises 78 residues: Large ribosomal subunit protein bL28 (78 aa).

It belongs to the bacterial ribosomal protein bL28 family.

This is Large ribosomal subunit protein bL28 from Shigella boydii serotype 4 (strain Sb227).